We begin with the raw amino-acid sequence, 319 residues long: Putative peptide permease protein BOV_A0351 (319 aa).

Transmembrane regions (helical) follow at residues 9–29, 102–122, 138–158, 182–202, 242–262, and 284–304; these read LLIGLGMLLALTILIFVLLQL, LLLMAAGLAIAIVIGVTTGII, LALLGISSPAFLTALLGLYVF, LLRHLALPALVLSIGHAALIM, LPVVTLIGSTIGLAVGGAIFI, and YPVIMGATLVIGACVIIVNIL. One can recognise an ABC transmembrane type-1 domain in the interval 98–305; it reads IGPTLLLMAA…ACVIIVNILT (208 aa).

The protein belongs to the binding-protein-dependent transport system permease family. The complex is composed of two ATP-binding proteins (BOV_A0347 and BOV_A0348), two transmembrane proteins (BOV_A0350 and BOV_A0351) and a solute-binding protein (BOV_A0352).

The protein localises to the cell inner membrane. Its function is as follows. Probably part of an ABC transporter complex that could be involved in peptide import. Probably responsible for the translocation of the substrate across the membrane. In Brucella ovis (strain ATCC 25840 / 63/290 / NCTC 10512), this protein is Putative peptide permease protein BOV_A0351.